Reading from the N-terminus, the 604-residue chain is Glutamine--fructose-6-phosphate aminotransferase [isomerizing] (604 aa).

Cys2 functions as the Nucleophile; for GATase activity in the catalytic mechanism. Positions 2–218 constitute a Glutamine amidotransferase type-2 domain; the sequence is CGIVGVVGNR…DKELVILTKD (217 aa). SIS domains follow at residues 284 to 423 and 456 to 594; these read IITS…ANGK and VQAL…VDKP. The For Fru-6P isomerization activity role is filled by Lys599.

Homodimer.

Its subcellular location is the cytoplasm. The enzyme catalyses D-fructose 6-phosphate + L-glutamine = D-glucosamine 6-phosphate + L-glutamate. Functionally, catalyzes the first step in hexosamine metabolism, converting fructose-6P into glucosamine-6P using glutamine as a nitrogen source. The protein is Glutamine--fructose-6-phosphate aminotransferase [isomerizing] of Streptococcus pyogenes serotype M18 (strain MGAS8232).